A 98-amino-acid chain; its full sequence is Post-transcriptional regulator ComN (98 aa).

As to quaternary structure, interacts directly with DivIVA.

Its subcellular location is the cytoplasm. Its function is as follows. Required for post-transcription initiation control of the comE operon. Promotes the accumulation of its target comE mRNA to septal and polar sites. This is Post-transcriptional regulator ComN (comN) from Bacillus subtilis (strain 168).